The following is a 409-amino-acid chain: F-box protein At3g17320 (409 aa).

Residues 1 to 47 form the F-box domain; it reads MTKISDLPRDLAEEVLSRVPVTYLRAIRFTCKKWNTLTKRRSFTKKL.

The protein is F-box protein At3g17320 of Arabidopsis thaliana (Mouse-ear cress).